The sequence spans 444 residues: MQVTQTLNEGLKRGYTITLTGAELDAKVTEKLIEVQPEVEIKGFRKGKVPMAMLRKNFGDRVLGDVLNESVDGAIKDLLDQSGDRPALQPKVEMENGKDWKPGTDAIFTVSYEALPPIPAFDRATVTLERLVVKADEASVTEALENLAKSAQAFEDRKKGTKAKDGDQVVIDFEGFLGDEPFEGGKGEEYPLVLGSNSFIPGFEDQLVGAKAGEDVEVKVTFPAEYGAAHLAGKEATFKCHVHAVKAPKPAEIDDELAKKFGAADLEALKGQVASRLEAEYKGASRAILKRALLDILDAQVKFDLPPSLVEAEAGQIAHQLWHEENPDHHGHDHGAVEPTEEHKTLAERRVRLGLLLAELGRNEKIEVTDAEMTQAVLAAARQYPGHEREFFEFVKGNAQMQQQIRAPLYEEKVIDFIVAGAAVTEKEVSKEELQKAIEALDEL.

The region spanning 166 to 251 is the PPIase FKBP-type domain; it reads GDQVVIDFEG…VHAVKAPKPA (86 aa).

The protein belongs to the FKBP-type PPIase family. Tig subfamily.

The protein resides in the cytoplasm. It carries out the reaction [protein]-peptidylproline (omega=180) = [protein]-peptidylproline (omega=0). Involved in protein export. Acts as a chaperone by maintaining the newly synthesized protein in an open conformation. Functions as a peptidyl-prolyl cis-trans isomerase. The protein is Trigger factor (tig) of Rhodobacter capsulatus (strain ATCC BAA-309 / NBRC 16581 / SB1003).